The sequence spans 799 residues: Elongation factor G, mitochondrial (799 aa).

The N-terminal 24 residues, 1–24 (MRCPSLARLPHRAVSGLTRTPVRF), are a transit peptide targeting the mitochondrion. In terms of domain architecture, tr-type G spans 97–384 (SRVRNIGIAA…GVIDYLPNPS (288 aa)). GTP contacts are provided by residues 106 to 113 (AHIDSGKT), 182 to 186 (DTPGH), and 236 to 239 (NKMD).

This sequence belongs to the TRAFAC class translation factor GTPase superfamily. Classic translation factor GTPase family. EF-G/EF-2 subfamily.

It localises to the mitochondrion. Its pathway is protein biosynthesis; polypeptide chain elongation. In terms of biological role, mitochondrial GTPase that catalyzes the GTP-dependent ribosomal translocation step during translation elongation. During this step, the ribosome changes from the pre-translocational (PRE) to the post-translocational (POST) state as the newly formed A-site-bound peptidyl-tRNA and P-site-bound deacylated tRNA move to the P and E sites, respectively. Catalyzes the coordinated movement of the two tRNA molecules, the mRNA and conformational changes in the ribosome. The sequence is that of Elongation factor G, mitochondrial (mef1) from Emericella nidulans (strain FGSC A4 / ATCC 38163 / CBS 112.46 / NRRL 194 / M139) (Aspergillus nidulans).